We begin with the raw amino-acid sequence, 478 residues long: ATP synthase subunit beta (478 aa).

160–167 contributes to the ATP binding site; the sequence is GGAGVGKT.

It belongs to the ATPase alpha/beta chains family. As to quaternary structure, F-type ATPases have 2 components, CF(1) - the catalytic core - and CF(0) - the membrane proton channel. CF(1) has five subunits: alpha(3), beta(3), gamma(1), delta(1), epsilon(1). CF(0) has three main subunits: a(1), b(2) and c(9-12). The alpha and beta chains form an alternating ring which encloses part of the gamma chain. CF(1) is attached to CF(0) by a central stalk formed by the gamma and epsilon chains, while a peripheral stalk is formed by the delta and b chains.

It is found in the cell inner membrane. The catalysed reaction is ATP + H2O + 4 H(+)(in) = ADP + phosphate + 5 H(+)(out). Produces ATP from ADP in the presence of a proton gradient across the membrane. The catalytic sites are hosted primarily by the beta subunits. The chain is ATP synthase subunit beta from Orientia tsutsugamushi (strain Boryong) (Rickettsia tsutsugamushi).